The chain runs to 128 residues: Ribonuclease P protein component 4 (128 aa).

Zn(2+)-binding residues include Cys-63, Cys-66, Cys-92, and Cys-95.

It belongs to the eukaryotic/archaeal RNase P protein component 4 family. Consists of a catalytic RNA component and at least 4 protein subunits. Forms a subcomplex with Rnp1 which stimulates the catalytic RNA. Requires Zn(2+) as cofactor.

It is found in the cytoplasm. The catalysed reaction is Endonucleolytic cleavage of RNA, removing 5'-extranucleotides from tRNA precursor.. Its function is as follows. Part of ribonuclease P, a protein complex that generates mature tRNA molecules by cleaving their 5'-ends. This chain is Ribonuclease P protein component 4, found in Methanocaldococcus jannaschii (strain ATCC 43067 / DSM 2661 / JAL-1 / JCM 10045 / NBRC 100440) (Methanococcus jannaschii).